We begin with the raw amino-acid sequence, 265 residues long: MSKTTIIERIWPAKEIIEDLSELRKQSPLTHVITNIVVTNWTANVLLAIGSSPAMVIAKEEAGEFAKIASGLLINIGTVTSNDAITMKIAAEAAHQAKIPWVLDPVAVGALGFRTELAKELLNFKPTVIRGNASEILALAGTDGGGKGVDSTALSSDALPLAQMLAEKTGAVIAISGEIDYVTNGKETISISGGDPIMTKVTGVGCSLGGVIASFLGVQKDPLRATASASAVFAIAGTRSAKISKGSGSFAVNFLDQLNLLSTEK.

Residue Met55 coordinates substrate. 2 residues coordinate ATP: Arg130 and Ser176. Gly203 serves as a coordination point for substrate.

The protein belongs to the Thz kinase family. The cofactor is Mg(2+).

It carries out the reaction 5-(2-hydroxyethyl)-4-methylthiazole + ATP = 4-methyl-5-(2-phosphooxyethyl)-thiazole + ADP + H(+). The protein operates within cofactor biosynthesis; thiamine diphosphate biosynthesis; 4-methyl-5-(2-phosphoethyl)-thiazole from 5-(2-hydroxyethyl)-4-methylthiazole: step 1/1. In terms of biological role, catalyzes the phosphorylation of the hydroxyl group of 4-methyl-5-beta-hydroxyethylthiazole (THZ). In Leptospira interrogans serogroup Icterohaemorrhagiae serovar Lai (strain 56601), this protein is Hydroxyethylthiazole kinase.